The primary structure comprises 316 residues: Probable 5-dehydro-4-deoxyglucarate dehydratase 1 (316 aa).

Belongs to the DapA family.

It carries out the reaction 5-dehydro-4-deoxy-D-glucarate + H(+) = 2,5-dioxopentanoate + CO2 + H2O. It participates in carbohydrate acid metabolism; D-glucarate degradation; 2,5-dioxopentanoate from D-glucarate: step 2/2. In Streptomyces coelicolor (strain ATCC BAA-471 / A3(2) / M145), this protein is Probable 5-dehydro-4-deoxyglucarate dehydratase 1.